Here is a 199-residue protein sequence, read N- to C-terminus: NAD(P)H dehydrogenase (quinone) (199 aa).

The region spanning 4-190 is the Flavodoxin-like domain; the sequence is VLVLYYSAYG…AGARYQGRVI (187 aa). Residues 10–15 and 78–80 each bind FMN; these read SAYGHI and TRF. Residue Y12 participates in NAD(+) binding. Substrate is bound at residue W98. FMN contacts are provided by residues 113–119 and H134; that span reads STATQHG.

It belongs to the WrbA family. The cofactor is FMN.

The catalysed reaction is a quinone + NADH + H(+) = a quinol + NAD(+). The enzyme catalyses a quinone + NADPH + H(+) = a quinol + NADP(+). The polypeptide is NAD(P)H dehydrogenase (quinone) (Bradyrhizobium sp. (strain ORS 278)).